Here is a 128-residue protein sequence, read N- to C-terminus: Tachykinin-4 (128 aa).

A signal peptide spans 1 to 16 (MLPLLALLLLIGPSVC). A propeptide spanning residues 17 to 54 (TTAGDREELAFGAEAESWVTVNLKGIPVPSIELKLQEL) is cleaved from the precursor. Met-66 carries the methionine amide modification. A propeptide spanning residues 69-128 (RVGGYQLGRIVQDLLGTRGLSIEGTCRQAASQQRARPGAVTRESLQSREEDEAPLTTSNV) is cleaved from the precursor. The interval 96–128 (QAASQQRARPGAVTRESLQSREEDEAPLTTSNV) is disordered.

It belongs to the tachykinin family. In terms of tissue distribution, expressed in hematopoietic cells with highest levels in pre- and pro-B cells but not in later developmental stages. Also detected in uterus, skeletal muscle, brain, spleen, stomach, skin and lactating mammary gland and in cells of myeloid lineage including dendritic and microglial cells and macrophages. In uterus, highest expression is observed in non-pregnant diestrus mice and in day 5 pregnant mice. Compared with mice in diestrus, decreases 2.6-fold in uteri from non-pregnant mice in estrus and 10.2-fold in day 17 pregnant mice. Detected at sites of chronic inflammation such as granulomas.

The protein localises to the secreted. Functionally, tachykinins are active peptides which excite neurons, evoke behavioral responses, are potent vasodilators and secretagogues, and contract (directly or indirectly) many smooth muscles. Hemokinin induces plasma extravasation, mast cell degranulation, muscle contraction, salivary secretion and scratching behavior. Increases sperm motility. Induces potent analgesic effects and may play a role in pain modulation. Promotes survival of bone marrow B lineage cells and of cultured LPS-stimulated pre-B cells and may act as an autocrine factor required for B-cell survival and proliferation. Lowers systemic arterial pressure following intravenous injection. Induces interferon-gamma production and may play a role in the inflammatory response. Shows potent affinity and specificity for the NK-1 receptor. This Mus musculus (Mouse) protein is Tachykinin-4.